We begin with the raw amino-acid sequence, 497 residues long: Histone-lysine N-methyltransferase ASHR3 (497 aa).

The PHD-type zinc-finger motif lies at 118 to 186 (MVDCLVCHKP…QWRCVKCPMA (69 aa)). The region spanning 283–326 (DGVGCTNCGPNCDRSCVCRVQCISCSKGCSCPESCGNRPFRKEK) is the AWS domain. The SET domain occupies 326-443 (KKIKIVKTEH…AGEPLTYDYR (118 aa)). A Post-SET domain is found at 449-465 (PEVKCNCGSENCQGYLG).

Belongs to the class V-like SAM-binding methyltransferase superfamily. Histone-lysine methyltransferase family. SET2 subfamily. As to quaternary structure, interacts with AMS/bHLH21 by its SET domain and PHD finger. As to expression, expressed in roots, flowers and buds, the anther and in stamen filaments.

Its subcellular location is the nucleus. It is found in the chromosome. It catalyses the reaction L-lysyl-[histone] + S-adenosyl-L-methionine = N(6)-methyl-L-lysyl-[histone] + S-adenosyl-L-homocysteine + H(+). Histone methyltransferase. Involved in stamen development. The protein is Histone-lysine N-methyltransferase ASHR3 (ASHR3) of Arabidopsis thaliana (Mouse-ear cress).